A 154-amino-acid polypeptide reads, in one-letter code: Cyanate hydratase (154 aa).

Active-site residues include Arg-100, Glu-103, and Ser-126.

Belongs to the cyanase family.

The catalysed reaction is cyanate + hydrogencarbonate + 3 H(+) = NH4(+) + 2 CO2. Functionally, catalyzes the reaction of cyanate with bicarbonate to produce ammonia and carbon dioxide. This Aspergillus clavatus (strain ATCC 1007 / CBS 513.65 / DSM 816 / NCTC 3887 / NRRL 1 / QM 1276 / 107) protein is Cyanate hydratase.